The sequence spans 221 residues: Tetraspanin-2 (221 aa).

The Cytoplasmic segment spans residues Met1 to Tyr13. The helical transmembrane segment at Leu14–Leu34 threads the bilayer. The Extracellular segment spans residues Trp35 to Tyr54. The chain crosses the membrane as a helical span at residues Phe55–Phe75. The Cytoplasmic segment spans residues Gly76–Ser90. A helical membrane pass occupies residues Phe91–Ile111. Over Gly112–Leu188 the chain is Extracellular. Residue Asn139 is glycosylated (N-linked (GlcNAc...) asparagine). A helical membrane pass occupies residues Ile189 to Val209. Residues Leu210–Ile221 lie on the Cytoplasmic side of the membrane.

It belongs to the tetraspanin (TM4SF) family.

The protein resides in the membrane. Functionally, may play a role in signalling in oligodendrocytes in the early stages of their terminal differentiation into myelin-forming glia and may also function in stabilizing the mature sheath. This is Tetraspanin-2 (TSPAN2) from Homo sapiens (Human).